A 641-amino-acid polypeptide reads, in one-letter code: Protein BCAP (641 aa).

4 coiled-coil regions span residues 83–144 (HWPV…KQND), 191–270 (EKDN…RKLE), 299–375 (QKQK…EREQ), and 487–599 (FKLE…TLNA).

This sequence belongs to the ODF2 family.

The protein localises to the cytoplasm. Its subcellular location is the cytoskeleton. It is found in the microtubule organizing center. The protein resides in the centrosome. It localises to the centriole. The protein localises to the centriolar satellite. Its subcellular location is the cilium basal body. Its function is as follows. Acts as a suppressor of ciliogenesis, specifically, the initiation of ciliogenesis. The polypeptide is Protein BCAP (odf2l) (Xenopus laevis (African clawed frog)).